We begin with the raw amino-acid sequence, 340 residues long: 3-isopropylmalate dehydrogenase (340 aa).

Arg-88, Arg-98, Arg-122, and Asp-212 together coordinate substrate. The Mg(2+) site is built by Asp-212, Asp-236, and Asp-240. Residue Gly-272 to Asp-284 participates in NAD(+) binding.

This sequence belongs to the isocitrate and isopropylmalate dehydrogenases family. LeuB type 2 subfamily. As to quaternary structure, homodimer. Requires Mg(2+) as cofactor. The cofactor is Mn(2+).

It is found in the cytoplasm. It carries out the reaction (2R,3S)-3-isopropylmalate + NAD(+) = 4-methyl-2-oxopentanoate + CO2 + NADH. It functions in the pathway amino-acid biosynthesis; L-leucine biosynthesis; L-leucine from 3-methyl-2-oxobutanoate: step 3/4. Its function is as follows. Catalyzes the oxidation of 3-carboxy-2-hydroxy-4-methylpentanoate (3-isopropylmalate) to 3-carboxy-4-methyl-2-oxopentanoate. The product decarboxylates to 4-methyl-2 oxopentanoate. This chain is 3-isopropylmalate dehydrogenase, found in Corynebacterium glutamicum (strain R).